The following is a 488-amino-acid chain: Acetyl-coenzyme A carboxylase carboxyl transferase subunit beta, chloroplastic (488 aa).

The segment at 189–211 (ISGSDSGSSNIRTDGNGSDIRGR) is disordered. In terms of domain architecture, CoA carboxyltransferase N-terminal spans 224–488 (LWVQCENCYG…LHGFFPLTQN (265 aa)). The Zn(2+) site is built by cysteine 228, cysteine 231, cysteine 247, and cysteine 250. The C4-type zinc finger occupies 228–250 (CENCYGLNYKKFFKSKMNICEQC).

Belongs to the AccD/PCCB family. As to quaternary structure, acetyl-CoA carboxylase is a heterohexamer composed of biotin carboxyl carrier protein, biotin carboxylase and 2 subunits each of ACCase subunit alpha and ACCase plastid-coded subunit beta (accD). Requires Zn(2+) as cofactor.

The protein localises to the plastid. Its subcellular location is the chloroplast stroma. It carries out the reaction N(6)-carboxybiotinyl-L-lysyl-[protein] + acetyl-CoA = N(6)-biotinyl-L-lysyl-[protein] + malonyl-CoA. Its pathway is lipid metabolism; malonyl-CoA biosynthesis; malonyl-CoA from acetyl-CoA: step 1/1. Component of the acetyl coenzyme A carboxylase (ACC) complex. Biotin carboxylase (BC) catalyzes the carboxylation of biotin on its carrier protein (BCCP) and then the CO(2) group is transferred by the transcarboxylase to acetyl-CoA to form malonyl-CoA. The polypeptide is Acetyl-coenzyme A carboxylase carboxyl transferase subunit beta, chloroplastic (Liriodendron tulipifera (Tuliptree)).